Here is a 109-residue protein sequence, read N- to C-terminus: Translation initiation factor IF-1, chloroplastic (109 aa).

The region spanning 18–93 is the S1-like domain; sequence KSLNQEKENL…TRGRIIYRLK (76 aa).

It belongs to the IF-1 family. In terms of assembly, component of the 30S ribosomal translation pre-initiation complex which assembles on the 30S ribosome in the order IF-2 and IF-3, IF-1 and N-formylmethionyl-tRNA(fMet); mRNA recruitment can occur at any time during PIC assembly.

It is found in the plastid. The protein localises to the chloroplast. In terms of biological role, one of the essential components for the initiation of protein synthesis. Stabilizes the binding of IF-2 and IF-3 on the 30S subunit to which N-formylmethionyl-tRNA(fMet) subsequently binds. Helps modulate mRNA selection, yielding the 30S pre-initiation complex (PIC). Upon addition of the 50S ribosomal subunit IF-1, IF-2 and IF-3 are released leaving the mature 70S translation initiation complex. The sequence is that of Translation initiation factor IF-1, chloroplastic from Tupiella akineta (Green alga).